A 649-amino-acid chain; its full sequence is Extracellular metalloproteinase 4 (649 aa).

An N-terminal signal peptide occupies residues 1–18 (MHGLLLAGLLALPSNVLG). Residues 19–260 (HPAEPPNSVN…VHGVVDYVAS (242 aa)) constitute a propeptide that is removed on maturation. His-443 is a Zn(2+) binding site. Residue Glu-444 is part of the active site. His-447 is a binding site for Zn(2+). Residues Asn-494 and Asn-609 are each glycosylated (N-linked (GlcNAc...) asparagine).

Belongs to the peptidase M36 family. The cofactor is Zn(2+).

The protein localises to the secreted. In terms of biological role, secreted metalloproteinase probably acting as a virulence factor. This chain is Extracellular metalloproteinase 4 (MEP4), found in Arthroderma otae (strain ATCC MYA-4605 / CBS 113480) (Microsporum canis).